The primary structure comprises 957 residues: Iron-responsive element-binding protein 2 (957 aa).

Positions 506, 572, and 575 each coordinate [4Fe-4S] cluster.

It belongs to the aconitase/IPM isomerase family. [4Fe-4S] cluster is required as a cofactor. Post-translationally, ubiquitinated and degraded by the proteasome in presence of high level of iron and oxygen.

The protein resides in the cytoplasm. RNA-binding protein that binds to iron-responsive elements (IRES), which are stem-loop structures found in the 5'-UTR of ferritin, and delta aminolevulinic acid synthase mRNAs, and in the 3'-UTR of transferrin receptor mRNA. Binding to the IRE element in ferritin results in the repression of its mRNA translation. Binding of the protein to the transferrin receptor mRNA inhibits the degradation of this otherwise rapidly degraded mRNA. The protein is Iron-responsive element-binding protein 2 (ireb2) of Xenopus tropicalis (Western clawed frog).